Reading from the N-terminus, the 500-residue chain is AAAATQAVPAPNQQPEVFYNQIFINNEWHDAVSKKTFPTVNPSTGEVICQVAAGDKEDVDRAVKAARAAFQLGSPWRRMDASDRGRLLNRLADLIERDRTYLAALETLDNGKPYVISYLVDLDMVLKCLRYYAGWADKYHGKTIPIDGDFFSYTRHEPVGVCGQIIPWNFPLLMQAAKLGPALATGNVVVMKVAEQTPLTALYVANLTKEAGFPPGVVNVVPGFGPTAGAAIASHEDVDKVAFTGSTEVGHLIQVAAGRSNLKKVTLELGGKSPNIIVSDADMDWAVEQAHFALFFNQGQCCGAGSRTFVQEDVYAEFVERSVARAKSRVVGNPFDSQTEQGPQVDETQFNKVLGYIKSGKEEGAKLLCGGGAAADRGYFIQPTVFGDVQDGMTIAKEEIFGPVMQILKFKTIEEVVGRANNSKYGLAAAVFTKDLDKANYLSQALQAGTVWINCYDVFGAQSPFGGYKMSGNGRELGEYGLQAYTEVKTVTIKVPQKNS.

N6-acetyllysine occurs at positions 35, 56, and 142. 245-250 (GSTEVG) provides a ligand contact to NAD(+). Catalysis depends on Glu268, which acts as the Proton acceptor. Residue Cys302 is the Nucleophile of the active site. N6-acetyllysine is present on residues Lys358, Lys366, Lys409, Lys411, Lys424, and Lys434.

It belongs to the aldehyde dehydrogenase family. As to quaternary structure, homotetramer. Post-translationally, in response to mitochondrial stress, the precursor protein is ubiquitinated by the SIFI complex in the cytoplasm before mitochondrial import, leading to its degradation. Within the SIFI complex, UBR4 initiates ubiquitin chain that are further elongated or branched by KCMF1.

The protein localises to the mitochondrion matrix. The catalysed reaction is an aldehyde + NAD(+) + H2O = a carboxylate + NADH + 2 H(+). It functions in the pathway alcohol metabolism; ethanol degradation; acetate from ethanol: step 2/2. Its function is as follows. Required for clearance of cellular formaldehyde, a cytotoxic and carcinogenic metabolite that induces DNA damage. In Equus caballus (Horse), this protein is Aldehyde dehydrogenase, mitochondrial (ALDH2).